Reading from the N-terminus, the 241-residue chain is Terpene cyclase olcD (241 aa).

7 helical membrane-spanning segments follow: residues Leu19–Ile39, Trp49–Pro71, Ile76–Ala95, Tyr108–Ile128, Phe137–Val157, Ser166–Phe186, and Leu202–Trp222.

This sequence belongs to the paxB family.

Its subcellular location is the membrane. The protein operates within secondary metabolite biosynthesis; terpenoid biosynthesis. In terms of biological role, terpene cyclase; part of the gene cluster that mediates the biosynthesis of 15-deoxyoxalicine B. The first step of the pathway is the synthesis of nicotinyl-CoA from nicotinic acid by the nicotinic acid-CoA ligase olcI. Nicotinyl-CoA is then a substrate of polyketide synthase olcA to produce 4-hydroxy-6-(3-pyridinyl)-2H-pyran-2-one (HPPO) which is further prenylated by the polyprenyl transferase olcH to yield geranylgeranyl-HPPO. Geranylgeranyl pyrophosphate is provided by the cluster-specific geranylgeranyl pyrophosphate synthase olcC. The FAD-dependent monooxygenase olcE catalyzes the epoxidation of geranylgeranyl-HPPO and the terpene cyclase olcD catalyzes the cyclization of the terpenoid component, resulting in the formation of the tricyclic terpene moiety seen in predecaturin E. The cytochrome P450 monooxygenase then catalyzes the allylic oxidation of predecaturin E, which is followed by spirocylization with concomitant loss of one molecule of water to form decaturin E. Decaturin E is the substrate of the cytochrome P450 monooxygenase olcJ which hydroxylates it at the C-29 position to form decaturin F. The short-chain dehydrogenase/reductase olcF may catalyze the oxidation of decaturin F to generate the 29-hydroxyl-27-one intermediate, and subsequent hemiacetal formation probably leads to the formation of decaturin C. The dioxygenase olcK may be a peroxisomal enzyme that catalyzes the hydroxylation of decaturin C into decaturin A once decaturin C is shuttled into the peroxisome by the MFS transporter olcL. Finally the cytochrome P450 monooxygenase olcB catalyzes the oxidative rearrangement to yield 15-deoxyoxalicine B. In the absence of olcJ, decaturin E may be shunted to a pathway in which it is oxidized to a ketone, possibly by olcF, to form decaturin D, which undergoes further allylic oxidation to yield decaturin G. Moreover, in the absence of oclK or oclL, oclB can convert decaturin C into 15-deoxyoxalicine A. This is Terpene cyclase olcD from Penicillium canescens.